Consider the following 1081-residue polypeptide: Psi-producing oxygenase A (1081 aa).

The linoleate 8R-lipoxygenase stretch occupies residues 105-446; it reads TKSFLNMLWN…DGAFNDDDLV (342 aa). His202 contributes to the heme b binding site. Tyr374 is a catalytic residue. His377 contacts heme b. The interval 654–1081 is 9,12-octadecadienoate 8-hydroperoxide 8R-isomerase; the sequence is IFISSHAACM…GELPQLKEDF (428 aa).

It belongs to the peroxidase family. Homotetramer. Heme b is required as a cofactor.

It catalyses the reaction (9Z,12Z)-octadecadienoate + O2 = (8R,9Z,12Z)-8-hydroperoxyoctadeca-9,12-dienoate. It carries out the reaction (8R,9Z,12Z)-8-hydroperoxyoctadeca-9,12-dienoate = (5S,8R,9Z,12Z)-5,8-dihydroxyoctadeca-9,12-dienoate. In terms of biological role, bifunctional heme-containing enzyme that oxidizes linoleic acid to (8R,9Z,12Z)-8-hydroperoxyoctadeca-9,12-dienoate (within the N-terminal heme peroxidase domain), which is subsequently isomerized to (5S,8R,9Z,12Z)-5,8-dihydroxyoctadeca-9,12-dienoate (within the C-terminal P450 heme thiolate domain). Oxidized unsaturated fatty acids, so-called oxylipins, derived from endogenous fatty acids, influence the development of the asexual conidiophores and sexual cleistothecia and regulate the secondary metabolism. These substances were collectively named psi factors and are primarily a mixture of hydroxylated oleic, linoleic and alpha-linolenic acids. They are termed psi-beta, psi-alpha, and psi-gamma, respectively. This chain is Psi-producing oxygenase A (ppoA), found in Emericella nidulans (Aspergillus nidulans).